Reading from the N-terminus, the 735-residue chain is Transcription factor sphG (735 aa).

The segment at residues 13-40 is a DNA-binding region (zn(2)-C6 fungal-type); the sequence is CDQCRARKIRCSREKPSCRNCGRLGLQC. The tract at residues 89–110 is disordered; that stretch reads TISPSARCPASPASPSPRLSDK. Over residues 91 to 106 the composition is skewed to low complexity; sequence SPSARCPASPASPSPR.

The protein resides in the nucleus. Transcription factor that regulates the expression of the gene cluster that mediates the biosynthesis of sphingofungins, bioactive molecules acting as sphingolipid inhibitors via inhibiting serine palmitoyl transferase (SPT). This Aspergillus fumigatus (strain CBS 144.89 / FGSC A1163 / CEA10) (Neosartorya fumigata) protein is Transcription factor sphG.